The chain runs to 173 residues: Lipoprotein signal peptidase (173 aa).

3 consecutive transmembrane segments (helical) span residues W12–Q32, W67–L87, and A102–I122. Residues D123 and D141 contribute to the active site. The helical transmembrane segment at F137–F157 threads the bilayer.

Belongs to the peptidase A8 family.

The protein resides in the cell inner membrane. The catalysed reaction is Release of signal peptides from bacterial membrane prolipoproteins. Hydrolyzes -Xaa-Yaa-Zaa-|-(S,diacylglyceryl)Cys-, in which Xaa is hydrophobic (preferably Leu), and Yaa (Ala or Ser) and Zaa (Gly or Ala) have small, neutral side chains.. Its pathway is protein modification; lipoprotein biosynthesis (signal peptide cleavage). Its function is as follows. This protein specifically catalyzes the removal of signal peptides from prolipoproteins. This Psychromonas ingrahamii (strain DSM 17664 / CCUG 51855 / 37) protein is Lipoprotein signal peptidase.